We begin with the raw amino-acid sequence, 612 residues long: Glycosyltransferase 25 family member (612 aa).

The first 20 residues, 1-20 (MNKQVIFGLLLACILVCISG), serve as a signal peptide directing secretion. Residues N106, N227, N263, and N524 are each glycosylated (N-linked (GlcNAc...) asparagine). Residues 609 to 612 (HQEL) carry the Prevents secretion from ER motif.

This sequence belongs to the glycosyltransferase 25 family.

Its subcellular location is the endoplasmic reticulum lumen. The protein is Glycosyltransferase 25 family member of Drosophila melanogaster (Fruit fly).